The following is a 170-amino-acid chain: Negative modulator of initiation of replication (170 aa).

An interaction with DNA region spans residues 139–145 (NTNTGRK).

This sequence belongs to the SeqA family. Homodimer. Polymerizes to form helical filaments.

The protein localises to the cytoplasm. Its function is as follows. Negative regulator of replication initiation, which contributes to regulation of DNA replication and ensures that replication initiation occurs exactly once per chromosome per cell cycle. Binds to pairs of hemimethylated GATC sequences in the oriC region, thus preventing assembly of replication proteins and re-initiation at newly replicated origins. Repression is relieved when the region becomes fully methylated. This chain is Negative modulator of initiation of replication, found in Tolumonas auensis (strain DSM 9187 / NBRC 110442 / TA 4).